The chain runs to 414 residues: Isocitrate dehydrogenase [NADP] cytoplasmic (414 aa).

The residue at position 2 (serine 2) is an N-acetylserine. Tyrosine 42 carries the phosphotyrosine modification. 75-77 (TIT) contacts NADP(+). Residue threonine 77 participates in substrate binding. N6-acetyllysine is present on lysine 81. Arginine 82 provides a ligand contact to NADP(+). Residues 94-100 (SPNGTIR) and arginine 109 each bind substrate. Residue lysine 126 is modified to N6-succinyllysine. Substrate contacts are provided by arginine 132 and lysine 212. Residues lysine 224, lysine 233, and lysine 243 each carry the N6-acetyllysine modification. A Mn(2+)-binding site is contributed by aspartate 252. Lysine 260 is an NADP(+) binding site. The Mn(2+) site is built by aspartate 275 and aspartate 279. 310–315 (GTVTRH) serves as a coordination point for NADP(+). At lysine 321 the chain carries N6-acetyllysine. Asparagine 328 lines the NADP(+) pocket. Phosphoserine is present on serine 389. Lysine 400 is modified (N6-succinyllysine).

Belongs to the isocitrate and isopropylmalate dehydrogenases family. In terms of assembly, homodimer. Mg(2+) serves as cofactor. Mn(2+) is required as a cofactor. The N-terminus is blocked. In terms of processing, acetylation at Lys-374 dramatically reduces catalytic activity. In terms of tissue distribution, ubiquitous.

It is found in the cytoplasm. The protein localises to the cytosol. It localises to the peroxisome. The catalysed reaction is D-threo-isocitrate + NADP(+) = 2-oxoglutarate + CO2 + NADPH. Its function is as follows. Catalyzes the NADP(+)-dependent oxidative decarboxylation of isocitrate (D-threo-isocitrate) to 2-ketoglutarate (2-oxoglutarate), which is required by other enzymes such as the phytanoyl-CoA dioxygenase. Plays a critical role in the generation of NADPH, an important cofactor in many biosynthesis pathways. May act as a corneal epithelial crystallin and may be involved in maintaining corneal epithelial transparency. This Rattus norvegicus (Rat) protein is Isocitrate dehydrogenase [NADP] cytoplasmic (Idh1).